Consider the following 248-residue polypeptide: MSSVGSGYDLYVSTYSPDGKLFQVDYANKAVENSGTLVAIKAKDGVVLGVEKLVPSKMLCSGSNRRVHHIDTHVGVAIAGFLADARQLITRARSEAKNYKSTYGQPIPIKVLSQRIASYNHMHTLYGSVRPFGCSIAITGIDQYGPQLFLVEPSGSCVGYFGASLGKGKQAAKNELEKIKFSEMTCREAIKEVSRIIYSVHDEVKDKDFELELGWISTETNNVHQIVPKELHDEAEAYAKQSLEDANM.

It belongs to the peptidase T1A family. As to quaternary structure, the 26S proteasome consists of a 20S proteasome core and two 19S regulatory subunits. The 20S proteasome core is composed of 28 subunits that are arranged in four stacked rings, resulting in a barrel-shaped structure. The two end rings are each formed by seven alpha subunits, and the two central rings are each formed by seven beta subunits. The catalytic chamber with the active sites is on the inside of the barrel.

It localises to the cytoplasm. The protein resides in the nucleus. Functionally, the proteasome is a multicatalytic proteinase complex which is characterized by its ability to cleave peptides with Arg, Phe, Tyr, Leu, and Glu adjacent to the leaving group at neutral or slightly basic pH. The proteasome has an ATP-dependent proteolytic activity. This chain is Proteasome subunit alpha type-3 (psmA3), found in Dictyostelium discoideum (Social amoeba).